A 1201-amino-acid chain; its full sequence is Putative disease resistance protein At4g19050 (1201 aa).

33–40 contributes to the ATP binding site; it reads GEAGIGKT. LRR repeat units follow at residues 469 to 491, 492 to 514, 517 to 539, 540 to 562, 680 to 701, 703 to 725, 726 to 748, 750 to 771, 773 to 795, 796 to 818, 820 to 841, 843 to 865, 866 to 888, and 890 to 911; these read KLRV…SGLQ, GLHV…FFKN, QLQS…EKLS, MLRC…IVET, ELRI…IADV, NLNK…EKLT, HLEV…FGEM, YLHE…ISEL, NLKE…EKLT, NLEI…FENL, CLHK…ISEL, HLVI…FESM, and YLCE…PKQS. Residues 1162-1180 are compositionally biased toward basic and acidic residues; sequence DEPRIGARITDEISEDQPH. The tract at residues 1162 to 1201 is disordered; that stretch reads DEPRIGARITDEISEDQPHKNTIGPETQTPTQPTKATDTV. Residues 1185–1201 show a composition bias toward polar residues; the sequence is GPETQTPTQPTKATDTV.

The protein belongs to the disease resistance NB-LRR family.

Potential disease resistance protein. The chain is Putative disease resistance protein At4g19050 from Arabidopsis thaliana (Mouse-ear cress).